The chain runs to 373 residues: Dual-specificity RNA methyltransferase RlmN (373 aa).

Glu91 serves as the catalytic Proton acceptor. Residues 97–339 (EDDRGTLCIS…TTVRKTRGDD (243 aa)) enclose the Radical SAM core domain. The cysteines at positions 104 and 344 are disulfide-linked. Residues Cys111, Cys115, and Cys118 each coordinate [4Fe-4S] cluster. S-adenosyl-L-methionine contacts are provided by residues 165–166 (GE), Ser197, 219–221 (SLH), and Asn301. The active-site S-methylcysteine intermediate is Cys344.

The protein belongs to the radical SAM superfamily. RlmN family. It depends on [4Fe-4S] cluster as a cofactor.

It localises to the cytoplasm. It carries out the reaction adenosine(2503) in 23S rRNA + 2 reduced [2Fe-2S]-[ferredoxin] + 2 S-adenosyl-L-methionine = 2-methyladenosine(2503) in 23S rRNA + 5'-deoxyadenosine + L-methionine + 2 oxidized [2Fe-2S]-[ferredoxin] + S-adenosyl-L-homocysteine. It catalyses the reaction adenosine(37) in tRNA + 2 reduced [2Fe-2S]-[ferredoxin] + 2 S-adenosyl-L-methionine = 2-methyladenosine(37) in tRNA + 5'-deoxyadenosine + L-methionine + 2 oxidized [2Fe-2S]-[ferredoxin] + S-adenosyl-L-homocysteine. In terms of biological role, specifically methylates position 2 of adenine 2503 in 23S rRNA and position 2 of adenine 37 in tRNAs. m2A2503 modification seems to play a crucial role in the proofreading step occurring at the peptidyl transferase center and thus would serve to optimize ribosomal fidelity. In Paracidovorax citrulli (strain AAC00-1) (Acidovorax citrulli), this protein is Dual-specificity RNA methyltransferase RlmN.